The following is a 190-amino-acid chain: UPF0301 protein PSPPH_0476 (190 aa).

It belongs to the UPF0301 (AlgH) family.

The polypeptide is UPF0301 protein PSPPH_0476 (Pseudomonas savastanoi pv. phaseolicola (strain 1448A / Race 6) (Pseudomonas syringae pv. phaseolicola (strain 1448A / Race 6))).